We begin with the raw amino-acid sequence, 219 residues long: MLILKGTKTVDLSKDELTEIIGQFDRVHIDLGTGDGRNIYKLAINDQNTFYIGIDPVKENLFDISKKIIKKPSKGGLSNVVFVIAAAESLPFELKNIADSISILFPWGTLLEYVIKPNRDILSNVADLAKKEAHFEFVTTYSDSYEEAEIKKRGLPLLSKAYFLSEQYKAELSNSGFRIDDVKELDNEYVKQFNSLWAKRLAFGRKRSFFRVSGHVSKH.

S-adenosyl-L-methionine is bound by residues Gly32, Asn38, Asp55, 87–88 (AE), 104–109 (LFPWGT), and 195–197 (SLW).

This sequence belongs to the methyltransferase superfamily. Kanamycin-apramycin resistance family.

The enzyme catalyses adenosine(1408) in 16S rRNA + S-adenosyl-L-methionine = N(1)-methyladenosine(1408) in 16S rRNA + S-adenosyl-L-homocysteine + H(+). Functionally, specifically methylates the N(1) position of adenine 1408 in 16S rRNA. Confers resistance to various aminoglycosides, including kanamycin, neomycin, apramycin, ribostamycin and gentamicin. Methylates only fully assembled 30S subunits. This Escherichia coli protein is 16S rRNA (adenine(1408)-N(1))-methyltransferase (npmA).